The following is a 476-amino-acid chain: UDP-N-acetylmuramate--L-alanine ligase (476 aa).

ATP is bound at residue 112-118 (GTHGKTT).

Belongs to the MurCDEF family.

The protein localises to the cytoplasm. It catalyses the reaction UDP-N-acetyl-alpha-D-muramate + L-alanine + ATP = UDP-N-acetyl-alpha-D-muramoyl-L-alanine + ADP + phosphate + H(+). The protein operates within cell wall biogenesis; peptidoglycan biosynthesis. In terms of biological role, cell wall formation. This Magnetococcus marinus (strain ATCC BAA-1437 / JCM 17883 / MC-1) protein is UDP-N-acetylmuramate--L-alanine ligase.